A 693-amino-acid chain; its full sequence is Subtilisin-like protease SBT4.10 (693 aa).

A signal peptide spans 1–25; sequence MAKLREASFCALACVLVLFLSFVSA. Residues 26 to 113 constitute a propeptide, activation peptide; sequence DTYNRQDKQV…VFPSKKYKLH (88 aa). Residues 35 to 113 enclose the Inhibitor I9 domain; the sequence is VYVVYMGSLP…VFPSKKYKLH (79 aa). Positions 117–536 constitute a Peptidase S8 domain; the sequence is SWDFMGLKEG…SGHIDPIAAI (420 aa). The active-site Charge relay system is D145. An N-linked (GlcNAc...) asparagine glycan is attached at N176. H200 acts as the Charge relay system in catalysis. N-linked (GlcNAc...) asparagine glycosylation is found at N215, N223, N368, N413, and N467. The PA domain occupies 354–396; that stretch reads QYPLVYETSVEKCNNESLTTLALSFLTLTPQSNEQIISMFHTL. The active-site Charge relay system is the S475. N559, N603, and N613 each carry an N-linked (GlcNAc...) asparagine glycan.

This sequence belongs to the peptidase S8 family. In terms of processing, the C-terminal propeptide is autocleaved.

The protein resides in the secreted. The polypeptide is Subtilisin-like protease SBT4.10 (Arabidopsis thaliana (Mouse-ear cress)).